The primary structure comprises 147 residues: Orcokinin peptides (147 aa).

The first 27 residues, 1 to 27 (MPRHSVFALSILALSITATVWIPTVQA), serve as a signal peptide directing secretion. 2 consecutive propeptides follow at residues 28 to 89 (ETNL…ERFG) and 146 to 147 (FG).

Belongs to the orcokinin family.

The protein localises to the secreted. Functionally, myotropic peptides. This Apis mellifera (Honeybee) protein is Orcokinin peptides.